A 577-amino-acid polypeptide reads, in one-letter code: CTP synthase (577 aa).

An amidoligase domain region spans residues 1–268 (MDPAFIFITG…GALLCERLRL (268 aa)). Position 14 (serine 14) interacts with CTP. Residue serine 14 coordinates UTP. Position 15–20 (15–20 (SLGKGI)) interacts with ATP. Tyrosine 55 lines the L-glutamine pocket. Aspartate 72 serves as a coordination point for ATP. Mg(2+) is bound by residues aspartate 72 and glutamate 142. CTP-binding positions include 149-151 (DIE), 189-194 (KTKPLQ), and lysine 225. UTP contacts are provided by residues 189-194 (KTKPLQ) and lysine 225. The Glutamine amidotransferase type-1 domain occupies 333–575 (TVALVGKYVS…VAAGLERKDS (243 aa)). Residue glycine 396 participates in L-glutamine binding. Cysteine 423 functions as the Nucleophile; for glutamine hydrolysis in the catalytic mechanism. Residues 424-427 (LGMQ), glutamate 447, and arginine 503 contribute to the L-glutamine site. Active-site residues include histidine 548 and glutamate 550.

The protein belongs to the CTP synthase family. In terms of assembly, homotetramer.

It carries out the reaction UTP + L-glutamine + ATP + H2O = CTP + L-glutamate + ADP + phosphate + 2 H(+). It catalyses the reaction L-glutamine + H2O = L-glutamate + NH4(+). The enzyme catalyses UTP + NH4(+) + ATP = CTP + ADP + phosphate + 2 H(+). It functions in the pathway pyrimidine metabolism; CTP biosynthesis via de novo pathway; CTP from UDP: step 2/2. Its activity is regulated as follows. Allosterically activated by GTP, when glutamine is the substrate; GTP has no effect on the reaction when ammonia is the substrate. The allosteric effector GTP functions by stabilizing the protein conformation that binds the tetrahedral intermediate(s) formed during glutamine hydrolysis. Inhibited by the product CTP, via allosteric rather than competitive inhibition. Functionally, catalyzes the ATP-dependent amination of UTP to CTP with either L-glutamine or ammonia as the source of nitrogen. Regulates intracellular CTP levels through interactions with the four ribonucleotide triphosphates. In Treponema pallidum (strain Nichols), this protein is CTP synthase.